The following is a 375-amino-acid chain: Succinyl-diaminopimelate desuccinylase (375 aa).

H66 is a Zn(2+) binding site. D68 is a catalytic residue. D99 provides a ligand contact to Zn(2+). E133 (proton acceptor) is an active-site residue. The Zn(2+) site is built by E134, E162, and H348.

This sequence belongs to the peptidase M20A family. DapE subfamily. In terms of assembly, homodimer. Requires Zn(2+) as cofactor. Co(2+) is required as a cofactor.

It carries out the reaction N-succinyl-(2S,6S)-2,6-diaminopimelate + H2O = (2S,6S)-2,6-diaminopimelate + succinate. It functions in the pathway amino-acid biosynthesis; L-lysine biosynthesis via DAP pathway; LL-2,6-diaminopimelate from (S)-tetrahydrodipicolinate (succinylase route): step 3/3. In terms of biological role, catalyzes the hydrolysis of N-succinyl-L,L-diaminopimelic acid (SDAP), forming succinate and LL-2,6-diaminopimelate (DAP), an intermediate involved in the bacterial biosynthesis of lysine and meso-diaminopimelic acid, an essential component of bacterial cell walls. The chain is Succinyl-diaminopimelate desuccinylase from Escherichia coli (strain SE11).